Reading from the N-terminus, the 280-residue chain is MFDFFRKSKYVTVKPETKQKEIPDGLWQKCPRCGEIIFNKELEKNFKVCPKCGYHFKISAWERIKLLCDENSFVEFGREISGGNPLNFPGYEEKLAEAREKTGLKEAVVTGLGKINGREVVLAIMDPNFIMASMGTAVGEKICLAMEKALEKKLPLVVFTASGGARMQEGIFSLMQMAKTVQLVNRLNAEKIFYLVVMTDPTTGGVSASFAALGDIILAEPGALIGFAGPRVIEQTIRQKLPEGFQRAEFLEQHGFIDAVVSREQQKEVITKLLAWHSQK.

The region spanning 26-280 (LWQKCPRCGE…TKLLAWHSQK (255 aa)) is the CoA carboxyltransferase N-terminal domain. Zn(2+) contacts are provided by Cys-30, Cys-33, Cys-49, and Cys-52. A C4-type zinc finger spans residues 30–52 (CPRCGEIIFNKELEKNFKVCPKC).

This sequence belongs to the AccD/PCCB family. Acetyl-CoA carboxylase is a heterohexamer composed of biotin carboxyl carrier protein (AccB), biotin carboxylase (AccC) and two subunits each of ACCase subunit alpha (AccA) and ACCase subunit beta (AccD). It depends on Zn(2+) as a cofactor.

The protein localises to the cytoplasm. It catalyses the reaction N(6)-carboxybiotinyl-L-lysyl-[protein] + acetyl-CoA = N(6)-biotinyl-L-lysyl-[protein] + malonyl-CoA. It participates in lipid metabolism; malonyl-CoA biosynthesis; malonyl-CoA from acetyl-CoA: step 1/1. Component of the acetyl coenzyme A carboxylase (ACC) complex. Biotin carboxylase (BC) catalyzes the carboxylation of biotin on its carrier protein (BCCP) and then the CO(2) group is transferred by the transcarboxylase to acetyl-CoA to form malonyl-CoA. The polypeptide is Acetyl-coenzyme A carboxylase carboxyl transferase subunit beta (Carboxydothermus hydrogenoformans (strain ATCC BAA-161 / DSM 6008 / Z-2901)).